A 247-amino-acid polypeptide reads, in one-letter code: MTATTTTTSQIFVSEDYNQDPNWYAVDNYTLSHLQPPTRPNHASLHQTLENSAKRGLEDISAFPTQAKFMALQCQLGGVKHALEVGTLGGYTAIYIASLNPDIRIVSIEIDPKSAEVAKENIAAAGYQDRIEVLVGAAIDLLPILQAKVENGEQERFGFTFIDANKDNGWDYFDYAVKMSRPRASIIVDNVVRAGKLVQEDYIKNDINVRGSRRTVENVGKDDRVDAVVLQTLSEKSYDGFLMAVVK.

Residues Glu84, 86-87 (GT), and Ala138 contribute to the S-adenosyl-L-methionine site. A divalent metal cation contacts are provided by Asp163, Asp189, and Asn190. Asp163 serves as a coordination point for substrate.

This sequence belongs to the class I-like SAM-binding methyltransferase superfamily. Cation-dependent O-methyltransferase family. CCoAMT subfamily. In terms of assembly, homodimer. It depends on a divalent metal cation as a cofactor.

The protein operates within secondary metabolite biosynthesis. Its function is as follows. O-methyltransferase; part of the gene cluster that mediates the biosynthesis of imizoquins A to D, tripeptide-derived alkaloids that serve a protective role against oxidative stress that are essential for normal germination. ImqB is a canonical three-module NRPS that assembles the tripeptide backbone of the imizoquins via condensation of Trp, Tyr, and Leu-derived precursors. N-methylation by imqF and phenol oxidation by imqC, followed by cyclization via the FAD-dependent oxidase imqH carry out the three-step transformation of L-tyrosine into tetrahydroisoquinoline. Importantly, this sequence requires the presence of a free amine in the tyrosine moiety, indicating that isoquinoline formation occurs prior to peptide bond formation. The imidazolidin-4-one ring of imizoquins could form following additional oxidation of the methyl-derived bridgehead carbon by imqH. Lastly, O-methylation by imqG and leucine hydroxylation by imqE complete biosynthesis of the imizoquins. This chain is O-methyltransferase imqG, found in Aspergillus flavus (strain ATCC 200026 / FGSC A1120 / IAM 13836 / NRRL 3357 / JCM 12722 / SRRC 167).